Here is a 468-residue protein sequence, read N- to C-terminus: Interleukin-9 receptor (468 aa).

An N-terminal signal peptide occupies residues 1–37; it reads MALGRCIAEGWTLERVAVKQVSWFLIYSWVCSGVCRG. The Extracellular segment spans residues 38–270; sequence VSVPEQGGGG…GLLVPRWQWS (233 aa). N-linked (GlcNAc...) asparagine glycans are attached at residues Asn116 and Asn155. Positions 148-256 constitute a Fibronectin type-III domain; the sequence is PPSDLQSNVS…WSQPVSFPSP (109 aa). A WSXWS motif motif is present at residues 244–248; that stretch reads WSEWS. The chain crosses the membrane as a helical span at residues 271-291; the sequence is ASILVVVPIFLLLTGFVHLLF. At 292–468 the chain is on the cytoplasmic side; it reads KLSPRLKRIF…PVALPVSSRA (177 aa). Positions 301 to 309 match the Box 1 motif motif; it reads FYQNIPSPE. The interval 407 to 426 is disordered; sequence PQEDWAPLGSARPPPPDSDS.

This sequence belongs to the type I cytokine receptor family. Type 4 subfamily. As to quaternary structure, interacts with IL9.

The protein resides in the cell membrane. It is found in the secreted. Its function is as follows. Plays an important role in the immune response against parasites by acting as a receptor of IL9. This Mus musculus (Mouse) protein is Interleukin-9 receptor (Il9r).